The chain runs to 415 residues: Putative serpin-Z6C (415 aa).

The segment at 357–381 is RCL; that stretch reads GTEAAAATAVCLTFASAAPSSRRPA.

This sequence belongs to the serpin family.

Probable serine protease inhibitor. This Oryza sativa subsp. japonica (Rice) protein is Putative serpin-Z6C.